The following is a 506-amino-acid chain: Nostrin (506 aa).

Residues 1–260 enclose the F-BAR domain; that stretch reads MRDPLTDCPY…AISKIDIEKD (260 aa). Ser-114 is modified (phosphoserine). The stretch at 160–222 forms a coiled coil; that stretch reads SMTEKEKRKL…LELEKERIQL (63 aa). Positions 292-372 constitute an REM-1 domain; it reads AMDKERRKSL…SYKLSSMLAE (81 aa). The region spanning 438–497 is the SH3 domain; the sequence is LSSRLCKALYSFQARQDDELNLEKGDIVIIHEKKEGGWWFGSLNGKKGHFPAAYVEELPS. At Ser-479 the chain carries Phosphoserine.

As to quaternary structure, homotrimer. Interacts with DAB2. Interacts with NOS3, DNM2, WASL and CAV1. Interacts (via SH3 domain) with DNM2; this interaction allows the recruitment of NOS3 to dynamin-positive structures. In terms of tissue distribution, expressed at highest levels in heart, kidney, placenta and lung, and at lowest levels in brain, thymus and spleen. Present in vascular endothelial cells and placenta. Over-expressed in placenta from women with pre-eclampsia (at protein level).

The protein localises to the cell membrane. The protein resides in the cytoplasmic vesicle. It is found in the cytoplasm. Its subcellular location is the cytoskeleton. It localises to the nucleus. Its function is as follows. Multivalent adapter protein which may decrease NOS3 activity by inducing its translocation away from the plasma membrane. The chain is Nostrin from Homo sapiens (Human).